Consider the following 311-residue polypeptide: Putative dihydroorotate dehydrogenase A (fumarate) (311 aa).

Substrate contacts are provided by residues K45, 69-73, and N128; that span reads NSMGL. 45–46 is a binding site for FMN; the sequence is KT. N128 contacts FMN. C131 (nucleophile) is an active-site residue. Positions 165 and 193 each coordinate FMN. A substrate-binding site is contributed by 194-195; the sequence is NS. FMN is bound by residues G220, 248 to 249, and 270 to 271; these read GG and GT.

It belongs to the dihydroorotate dehydrogenase family. Type 1 subfamily. In terms of assembly, homodimer. Requires FMN as cofactor.

The protein resides in the cytoplasm. The catalysed reaction is (S)-dihydroorotate + fumarate = orotate + succinate. It functions in the pathway pyrimidine metabolism; UMP biosynthesis via de novo pathway. Its function is as follows. Catalyzes the conversion of dihydroorotate to orotate with fumarate as the electron acceptor. The chain is Putative dihydroorotate dehydrogenase A (fumarate) (pyrD) from Streptococcus pyogenes serotype M1.